A 482-amino-acid polypeptide reads, in one-letter code: Proton extrusion protein PxcA (482 aa).

Helical transmembrane passes span 265–285 (FVLGLMIVPLLTQQVSKNLVI), 359–379 (PLKNAISDLFSLVALAIYFVL), 406–426 (IIILFTDVFVGFHSPHGWEVI), and 442–462 (FINMFIATFPVMLDTVFKYWI).

This sequence belongs to the CemA family.

It is found in the cell inner membrane. Its function is as follows. Required for H(+) efflux immediately after light irradiation to form a rapid H(+) concentration gradient across the thylakoid membranes. Together with PxcL, contributes to transient H(+) uptake following dark to light transition. This Acaryochloris marina (strain MBIC 11017) protein is Proton extrusion protein PxcA.